The chain runs to 952 residues: GATA zinc finger domain-containing protein 5 (952 aa).

Disordered regions lie at residues 1–36 (MDYQ…DSPS) and 138–197 (PTPL…SPKQ). A compositionally biased stretch (polar residues) spans 10 to 24 (QISQEFPTDISTTKS). Pro residues predominate over residues 148-157 (SPPPPPPPPA). Residues 158–196 (ATTTTTITTTTTTSAGNSTTKNNNNNNNNNNNNNGKSPK) are compositionally biased toward low complexity. The GATA-type zinc-finger motif lies at 241 to 266 (CYQCNTSNTPEWRKGPEGPATLCNAC). Disordered stretches follow at residues 380 to 418 (MTPS…HEQP), 433 to 478 (LLSS…GGGG), 634 to 699 (QNNS…NKNN), and 732 to 816 (QQQE…LSVN). The span at 393 to 412 (KTTKTKPKPKSKSKPGKITH) shows a compositional bias: basic residues. Residues 445-467 (SSSSSCGTSLNSSLGSSSGTITN) are compositionally biased toward low complexity. The segment covering 468-478 (SGGGSSGGGGG) has biased composition (gly residues). Over residues 634–653 (QNNSFSGPNDQNPYVPSVSL) the composition is skewed to polar residues. Low complexity-rich tracts occupy residues 654–668 (NSNK…NNNK), 678–699 (NNKN…NKNN), and 732–745 (QQQE…EQQQ). The segment covering 746 to 762 (NLSINNSNQTNENEILG) has biased composition (polar residues). Residues 763 to 814 (TTTTTTTSTATIITSQVPMNLSPNSDDNQSSSNYSTLSDSGSSPTDSFSGLS) are compositionally biased toward low complexity.

The protein is GATA zinc finger domain-containing protein 5 (gtaE) of Dictyostelium discoideum (Social amoeba).